Here is a 388-residue protein sequence, read N- to C-terminus: NADH-quinone oxidoreductase subunit D 2 (388 aa).

This sequence belongs to the complex I 49 kDa subunit family. In terms of assembly, NDH-1 is composed of 14 different subunits. Subunits NuoB, C, D, E, F, and G constitute the peripheral sector of the complex.

The protein resides in the cell membrane. The enzyme catalyses a quinone + NADH + 5 H(+)(in) = a quinol + NAD(+) + 4 H(+)(out). In terms of biological role, NDH-1 shuttles electrons from NADH, via FMN and iron-sulfur (Fe-S) centers, to quinones in the respiratory chain. The immediate electron acceptor for the enzyme in this species is believed to be a menaquinone. Couples the redox reaction to proton translocation (for every two electrons transferred, four hydrogen ions are translocated across the cytoplasmic membrane), and thus conserves the redox energy in a proton gradient. The sequence is that of NADH-quinone oxidoreductase subunit D 2 from Salinispora tropica (strain ATCC BAA-916 / DSM 44818 / JCM 13857 / NBRC 105044 / CNB-440).